The sequence spans 118 residues: Large ribosomal subunit protein bL19 (118 aa).

The protein belongs to the bacterial ribosomal protein bL19 family.

Functionally, this protein is located at the 30S-50S ribosomal subunit interface and may play a role in the structure and function of the aminoacyl-tRNA binding site. The protein is Large ribosomal subunit protein bL19 of Hahella chejuensis (strain KCTC 2396).